Consider the following 754-residue polypeptide: Exocyst complex component EXO84A (754 aa).

2 disordered regions span residues 514 to 540 (RILPQGTSQSTPRRGSSDRQNRPEQRE) and 734 to 754 (GHGERDVTSPSVSSAKSYTSN). The segment covering 518 to 527 (QGTSQSTPRR) has biased composition (polar residues). Residues 528-540 (GSSDRQNRPEQRE) show a composition bias toward basic and acidic residues. Over residues 741 to 754 (TSPSVSSAKSYTSN) the composition is skewed to polar residues.

It belongs to the EXO84 family. As to quaternary structure, the exocyst complex is composed of SEC3, SEC5, SEC6, SEC8, SEC10, EXO70A1 and EXO84.

Functionally, component of the exocyst complex involved in the docking of exocytic vesicles with fusion sites on the plasma membrane during regulated or polarized secretion. Involved in polarized cell growth and organ morphogenesis. During cytokinesis, involved in cell plate initiation, cell plate maturation and formation of new primary cell wall. This is Exocyst complex component EXO84A (EXO84A) from Arabidopsis thaliana (Mouse-ear cress).